The chain runs to 373 residues: Dof zinc finger protein 3 (373 aa).

The interval 1–23 is disordered; it reads MASGGALSPVEEKPTVVKTTKAE. A compositionally biased stretch (basic and acidic residues) spans 10–23; that stretch reads VEEKPTVVKTTKAE. A Dof-type zinc finger spans residues 45 to 99; the sequence is PCCPRCNSIKTKFCYYNNYSMAQPRYFCRECRRYWTQGGSLRNVPVGGGCRKSKR. Residues Cys47, Cys50, Cys72, and Cys75 each contribute to the Zn(2+) site. Positions 297–327 are disordered; sequence ALGGADEQQGGGDGGEAVMTKDTGGGASSSA.

In terms of assembly, interacts with RISBZ1/BZIP58.

It is found in the nucleus. Transcriptional activator that binds specifically to the DNA consensus core sequence 5'-AAAG-3' also known as prolamin box. Can activate the expression of genes encoding for the seed storage proteins glutelin, prolamin and globulin. Functions synergistically with RISBZ/BZIP58 to positively regulate quantitatively many seed storage proteins. Functions synergistically with RISBZ1/BZIP58 to positively regulate some metabolic enzymes, such as alanine aminotransferase and pyruvate phosphate dikinase, that are expressed in developing seeds. Functions synergistically with RISBZ1/BZIP58 to positively regulate genes that are key players in the development of aleurone layers. Functions synergistically with RISBZ1/BZIP58 to positively regulate the glutelin GLUD-1 gene in endosperm of developing seeds. Can activate the expression of the bifunctional lysine-degrading enzyme, lysine ketoglutarate reductase/saccharopine dehydrogenase (LKR/SDH), one of the key regulators determining free lysine content in plants. In germinating seeds, involved in the gibberellin-mediated activation of the alpha-amylase AMY1.1/AMY1A gene. This chain is Dof zinc finger protein 3, found in Oryza sativa subsp. japonica (Rice).